A 217-amino-acid polypeptide reads, in one-letter code: Glycerol-3-phosphate acyltransferase (217 aa).

Helical transmembrane passes span 1–21 (MAWAISGLLVILGYLLGSIPT), 54–74 (TAAIAVLIIDMLKAMVAVGGV), 84–104 (AIVPLDWKPWLIVTVASAAIL), 126–146 (VLLVLNPLVALGALASFLFML), and 165–185 (LLMLVLHQPLAYILFAILAGI).

Belongs to the PlsY family. Probably interacts with PlsX.

The protein resides in the cell inner membrane. The catalysed reaction is an acyl phosphate + sn-glycerol 3-phosphate = a 1-acyl-sn-glycero-3-phosphate + phosphate. It participates in lipid metabolism; phospholipid metabolism. Catalyzes the transfer of an acyl group from acyl-phosphate (acyl-PO(4)) to glycerol-3-phosphate (G3P) to form lysophosphatidic acid (LPA). This enzyme utilizes acyl-phosphate as fatty acyl donor, but not acyl-CoA or acyl-ACP. The polypeptide is Glycerol-3-phosphate acyltransferase (Rippkaea orientalis (strain PCC 8801 / RF-1) (Cyanothece sp. (strain PCC 8801))).